Consider the following 437-residue polypeptide: 3-ketoacyl-CoA thiolase (437 aa).

The Acyl-thioester intermediate role is filled by Cys99. Residues His392 and Cys422 each act as proton acceptor in the active site.

It belongs to the thiolase-like superfamily. Thiolase family. In terms of assembly, heterotetramer of two alpha chains (FadJ) and two beta chains (FadI).

It is found in the cytoplasm. It catalyses the reaction an acyl-CoA + acetyl-CoA = a 3-oxoacyl-CoA + CoA. It functions in the pathway lipid metabolism; fatty acid beta-oxidation. Its function is as follows. Catalyzes the final step of fatty acid oxidation in which acetyl-CoA is released and the CoA ester of a fatty acid two carbons shorter is formed. The sequence is that of 3-ketoacyl-CoA thiolase from Pectobacterium carotovorum subsp. carotovorum (strain PC1).